The following is a 473-amino-acid chain: RuvB-like helicase 2 (473 aa).

76–83 serves as a coordination point for ATP; that stretch reads GPPSTGKT.

The protein belongs to the RuvB family. In terms of assembly, may form heterododecamers with RVB1. Component of the SWR1 chromatin remodeling complex, the INO80 chromatin remodeling complex, and of the R2TP complex.

The protein localises to the nucleus. It catalyses the reaction ATP + H2O = ADP + phosphate + H(+). Its function is as follows. DNA helicase which participates in several chromatin remodeling complexes, including the SWR1 and the INO80 complexes. The SWR1 complex mediates the ATP-dependent exchange of histone H2A for the H2A variant HZT1 leading to transcriptional regulation of selected genes by chromatin remodeling. The INO80 complex remodels chromatin by shifting nucleosomes and is involved in DNA repair. Also involved in pre-rRNA processing. The polypeptide is RuvB-like helicase 2 (RVB2) (Gibberella zeae (strain ATCC MYA-4620 / CBS 123657 / FGSC 9075 / NRRL 31084 / PH-1) (Wheat head blight fungus)).